The primary structure comprises 710 residues: Integrator complex subunit 10 (710 aa).

Phosphoserine occurs at positions 231, 381, and 382. Residue K464 forms a Glycyl lysine isopeptide (Lys-Gly) (interchain with G-Cter in SUMO2) linkage.

Belongs to the Integrator subunit 10 family. In terms of assembly, component of the Integrator complex, composed of core subunits INTS1, INTS2, INTS3, INTS4, INTS5, INTS6, INTS7, INTS8, INTS9/RC74, INTS10, INTS11/CPSF3L, INTS12, INTS13, INTS14 and INTS15. The core complex associates with protein phosphatase 2A subunits PPP2CA and PPP2R1A, to form the Integrator-PP2A (INTAC) complex. INTS10 is part of the tail subcomplex, composed of INTS10, INTS13, INTS14 and INTS15.

The protein resides in the nucleus. Its function is as follows. Component of the integrator complex, a multiprotein complex that terminates RNA polymerase II (Pol II) transcription in the promoter-proximal region of genes. The integrator complex provides a quality checkpoint during transcription elongation by driving premature transcription termination of transcripts that are unfavorably configured for transcriptional elongation: the complex terminates transcription by (1) catalyzing dephosphorylation of the C-terminal domain (CTD) of Pol II subunit POLR2A/RPB1 and SUPT5H/SPT5, (2) degrading the exiting nascent RNA transcript via endonuclease activity and (3) promoting the release of Pol II from bound DNA. The integrator complex is also involved in terminating the synthesis of non-coding Pol II transcripts, such as enhancer RNAs (eRNAs), small nuclear RNAs (snRNAs), telomerase RNAs and long non-coding RNAs (lncRNAs). Within the integrator complex, INTS10 is part of the integrator tail module that acts as a platform for the recruitment of transcription factors at promoters. May be not involved in the recruitment of cytoplasmic dynein to the nuclear envelope, probably as component of the integrator complex. The polypeptide is Integrator complex subunit 10 (Homo sapiens (Human)).